The sequence spans 222 residues: Disulfide bond formation protein D (222 aa).

An N-terminal signal peptide occupies residues 1–36 (MKKKQQSSAKFAVILTVVVVVLLAAIVIINNKTEQG). Residues 37-220 (NDAVSGQPSI…IKETIEKELK (184 aa)) enclose the Thioredoxin domain. Residues Cys69 and Cys72 are joined by a disulfide bond.

Belongs to the thioredoxin family. DsbA subfamily.

Its subcellular location is the cell membrane. The protein localises to the membrane raft. Its function is as follows. Required for the stabilization, possibly via formation of a disulfide bond, of the obligatory competence protein ComGC. May be required for the stability of secreted proteins with disulfide bonds. Not required for sporulation. This is Disulfide bond formation protein D (bdbD) from Bacillus subtilis (strain 168).